Here is a 357-residue protein sequence, read N- to C-terminus: MKFGNFLLTYQPPQLDQKEVIKRLVNLGQASESCGFDTAWLLEHHFTEFGLLGNPYVAAANLLGATKKLHVGTAAVVLPTAHPVRQLEDVNLLDQMSKGRFKFGICRGLYDKDFRVFGTDMSNSRELMNSWYDIMTKGMIEGHVSSDNEHIKFPKVKVSPNSYTQRGAPVYVVAESASTTEWAAERGLPIILSWIINNNEKKSQLDLYNEIALEHGHDVSNIDHCMSYITSVDHNSNKAKDICRDFLAHWYDSYLNATSIFDDSNQTKGYDFNKGQWRNFVLKGHKDTNRRIDYSYEINPVGTPQECIEIIQSDIDATGIHNICCGFEANGSETEIIASMKLFQSDVMPYLKEKSNC.

It belongs to the bacterial luciferase oxidoreductase family. In terms of assembly, heterodimer of an alpha and a beta chain.

It carries out the reaction a long-chain fatty aldehyde + FMNH2 + O2 = a long-chain fatty acid + hnu + FMN + H2O + 2 H(+). Functionally, light-emitting reaction in luminous bacteria. This Kryptophanaron alfredi symbiont protein is Alkanal monooxygenase alpha chain (luxA).